The following is a 163-amino-acid chain: 6,7-dimethyl-8-ribityllumazine synthase (163 aa).

5-amino-6-(D-ribitylamino)uracil contacts are provided by residues Phe27, 58 to 60 (ALE), and 87 to 89 (CVV). Residue 92–93 (DT) participates in (2S)-2-hydroxy-3-oxobutyl phosphate binding. His95 functions as the Proton donor in the catalytic mechanism. 5-amino-6-(D-ribitylamino)uracil is bound at residue Asn120. Arg134 lines the (2S)-2-hydroxy-3-oxobutyl phosphate pocket.

Belongs to the DMRL synthase family.

The catalysed reaction is (2S)-2-hydroxy-3-oxobutyl phosphate + 5-amino-6-(D-ribitylamino)uracil = 6,7-dimethyl-8-(1-D-ribityl)lumazine + phosphate + 2 H2O + H(+). The protein operates within cofactor biosynthesis; riboflavin biosynthesis; riboflavin from 2-hydroxy-3-oxobutyl phosphate and 5-amino-6-(D-ribitylamino)uracil: step 1/2. Its function is as follows. Catalyzes the formation of 6,7-dimethyl-8-ribityllumazine by condensation of 5-amino-6-(D-ribitylamino)uracil with 3,4-dihydroxy-2-butanone 4-phosphate. This is the penultimate step in the biosynthesis of riboflavin. This is 6,7-dimethyl-8-ribityllumazine synthase from Nitrobacter winogradskyi (strain ATCC 25391 / DSM 10237 / CIP 104748 / NCIMB 11846 / Nb-255).